We begin with the raw amino-acid sequence, 556 residues long: Large cysteine-rich periplasmic protein OmcB (556 aa).

An N-terminal signal peptide occupies residues M1–A22. Positions S23–A40 are excised as a propeptide.

In terms of assembly, part of a disulfide cross-linked outer membrane complex (COMC) composed of the major outer membrane porin (MOMP), the small cysteine-rich protein (OmcA) and the large cysteine-rich periplasmic protein (OmcB).

It localises to the periplasm. In elementary bodies (EBs, the infectious stage, which is able to survive outside the host cell) provides the structural integrity of the outer envelope through disulfide cross-links with the small cysteine-rich protein and the major outer membrane porin. It has been described in publications as the Sarkosyl-insoluble COMC (Chlamydia outer membrane complex), and serves as the functional equivalent of peptidoglycan. The chain is Large cysteine-rich periplasmic protein OmcB (omcB) from Chlamydia pneumoniae (Chlamydophila pneumoniae).